A 148-amino-acid polypeptide reads, in one-letter code: 3-hydroxyacyl-[acyl-carrier-protein] dehydratase FabZ (148 aa).

H47 is a catalytic residue.

The protein belongs to the thioester dehydratase family. FabZ subfamily.

The protein resides in the cytoplasm. The enzyme catalyses a (3R)-hydroxyacyl-[ACP] = a (2E)-enoyl-[ACP] + H2O. Involved in unsaturated fatty acids biosynthesis. Catalyzes the dehydration of short chain beta-hydroxyacyl-ACPs and long chain saturated and unsaturated beta-hydroxyacyl-ACPs. In Hydrogenobaculum sp. (strain Y04AAS1), this protein is 3-hydroxyacyl-[acyl-carrier-protein] dehydratase FabZ.